Here is a 385-residue protein sequence, read N- to C-terminus: T-box transcription factor TBX10 (385 aa).

Positions Leu69–Glu252 form a DNA-binding region, T-box. 2 disordered regions span residues Gly283–Leu310 and Gln328–Gln359. Residues Lys293–Asn307 are compositionally biased toward polar residues. The span at Tyr331–Pro347 shows a compositional bias: low complexity.

The protein localises to the nucleus. Probable transcriptional regulator involved in developmental processes. This Mus musculus (Mouse) protein is T-box transcription factor TBX10 (Tbx10).